The chain runs to 341 residues: Anthranilate phosphoribosyltransferase (341 aa).

Residues glycine 80, 83 to 84, threonine 88, 90 to 93, 108 to 116, and serine 120 each bind 5-phospho-alpha-D-ribose 1-diphosphate; these read GD, NIST, and KHGNRSVSS. Glycine 80 is a binding site for anthranilate. Residue serine 92 coordinates Mg(2+). Position 111 (asparagine 111) interacts with anthranilate. Arginine 166 serves as a coordination point for anthranilate. Residues aspartate 225 and glutamate 226 each coordinate Mg(2+).

Belongs to the anthranilate phosphoribosyltransferase family. Homodimer. The cofactor is Mg(2+).

The enzyme catalyses N-(5-phospho-beta-D-ribosyl)anthranilate + diphosphate = 5-phospho-alpha-D-ribose 1-diphosphate + anthranilate. It participates in amino-acid biosynthesis; L-tryptophan biosynthesis; L-tryptophan from chorismate: step 2/5. Its function is as follows. Catalyzes the transfer of the phosphoribosyl group of 5-phosphorylribose-1-pyrophosphate (PRPP) to anthranilate to yield N-(5'-phosphoribosyl)-anthranilate (PRA). This chain is Anthranilate phosphoribosyltransferase, found in Shouchella clausii (strain KSM-K16) (Alkalihalobacillus clausii).